Reading from the N-terminus, the 350-residue chain is Biotin synthase (350 aa).

The region spanning 38 to 262 is the Radical SAM core domain; that stretch reads RQVQVSTLLS…MMPTSYVRLS (225 aa). 3 residues coordinate [4Fe-4S] cluster: Cys-53, Cys-57, and Cys-60. 4 residues coordinate [2Fe-2S] cluster: Cys-97, Cys-128, Cys-188, and Arg-260.

Belongs to the radical SAM superfamily. Biotin synthase family. In terms of assembly, homodimer. [4Fe-4S] cluster is required as a cofactor. It depends on [2Fe-2S] cluster as a cofactor.

The catalysed reaction is (4R,5S)-dethiobiotin + (sulfur carrier)-SH + 2 reduced [2Fe-2S]-[ferredoxin] + 2 S-adenosyl-L-methionine = (sulfur carrier)-H + biotin + 2 5'-deoxyadenosine + 2 L-methionine + 2 oxidized [2Fe-2S]-[ferredoxin]. The protein operates within cofactor biosynthesis; biotin biosynthesis; biotin from 7,8-diaminononanoate: step 2/2. Catalyzes the conversion of dethiobiotin (DTB) to biotin by the insertion of a sulfur atom into dethiobiotin via a radical-based mechanism. The sequence is that of Biotin synthase from Yersinia enterocolitica serotype O:8 / biotype 1B (strain NCTC 13174 / 8081).